The chain runs to 496 residues: Glutamyl-tRNA(Gln) amidotransferase subunit A (496 aa).

Residues Lys75 and Ser150 each act as charge relay system in the active site. Ser174 (acyl-ester intermediate) is an active-site residue.

Belongs to the amidase family. GatA subfamily. Heterotrimer of A, B and C subunits.

The catalysed reaction is L-glutamyl-tRNA(Gln) + L-glutamine + ATP + H2O = L-glutaminyl-tRNA(Gln) + L-glutamate + ADP + phosphate + H(+). In terms of biological role, allows the formation of correctly charged Gln-tRNA(Gln) through the transamidation of misacylated Glu-tRNA(Gln) in organisms which lack glutaminyl-tRNA synthetase. The reaction takes place in the presence of glutamine and ATP through an activated gamma-phospho-Glu-tRNA(Gln). The polypeptide is Glutamyl-tRNA(Gln) amidotransferase subunit A (Burkholderia thailandensis (strain ATCC 700388 / DSM 13276 / CCUG 48851 / CIP 106301 / E264)).